Consider the following 632-residue polypeptide: Eukaryotic peptide chain release factor GTP-binding subunit ERF3B (632 aa).

Disordered stretches follow at residues 1 to 31 (MDLGSSSDSAPDCWDQVDMEAPGSAPSGDGI) and 162 to 200 (SEAKPEASLGDAGPPEESVKEVMEEKEEVRKSKSVSIPS). A compositionally biased stretch (basic and acidic residues) spans 178–192 (ESVKEVMEEKEEVRK). One can recognise a tr-type G domain in the interval 205 to 429 (KEHVNVVFIG…YLDSLPNFNR (225 aa)). The tract at residues 214–221 (GHVDAGKS) is G1. 217–222 (DAGKST) serves as a coordination point for GTP. The interval 270 to 274 (GKTVE) is G2. A G3 region spans residues 291 to 294 (DAPG). Residues 353-356 (NKMD) and 395-397 (SGL) each bind GTP. Residues 353 to 356 (NKMD) form a G4 region. The tract at residues 395 to 397 (SGL) is G5.

The protein belongs to the TRAFAC class translation factor GTPase superfamily. Classic translation factor GTPase family. ERF3 subfamily. Component of the eRF1-eRF3-GTP ternary complex, composed of ETF1/ERF1 and ERF3 (GSPT1/ERF3A or GSPT2/ERF3B) and GTP. Component of the transient SURF (SMG1-UPF1-eRF1-eRF3) complex. Interacts with UPF1 and PABPC1. Highly expressed in brain. Moderately expressed in spleen and lung. Weakly expressed in heart, liver and kidney. Expression during the cell-cycle progression is constant.

The protein resides in the cytoplasm. The enzyme catalyses GTP + H2O = GDP + phosphate + H(+). Functionally, GTPase component of the eRF1-eRF3-GTP ternary complex, a ternary complex that mediates translation termination in response to the termination codons UAA, UAG and UGA. GSPT2/ERF3B mediates ETF1/ERF1 delivery to stop codons: The eRF1-eRF3-GTP complex binds to a stop codon in the ribosomal A-site. GTP hydrolysis by GSPT2/ERF3B induces a conformational change that leads to its dissociation, permitting ETF1/ERF1 to accommodate fully in the A-site. Component of the transient SURF complex which recruits UPF1 to stalled ribosomes in the context of nonsense-mediated decay (NMD) of mRNAs containing premature stop codons. The sequence is that of Eukaryotic peptide chain release factor GTP-binding subunit ERF3B (Gspt2) from Mus musculus (Mouse).